A 218-amino-acid chain; its full sequence is Phosphatidylserine decarboxylase proenzyme (218 aa).

Residue Ser183 is the Schiff-base intermediate with substrate; via pyruvic acid of the active site. At Ser183 the chain carries Pyruvic acid (Ser); by autocatalysis.

It belongs to the phosphatidylserine decarboxylase family. PSD-A subfamily. Heterodimer of a large membrane-associated beta subunit and a small pyruvoyl-containing alpha subunit. It depends on pyruvate as a cofactor. Is synthesized initially as an inactive proenzyme. Formation of the active enzyme involves a self-maturation process in which the active site pyruvoyl group is generated from an internal serine residue via an autocatalytic post-translational modification. Two non-identical subunits are generated from the proenzyme in this reaction, and the pyruvate is formed at the N-terminus of the alpha chain, which is derived from the carboxyl end of the proenzyme. The post-translation cleavage follows an unusual pathway, termed non-hydrolytic serinolysis, in which the side chain hydroxyl group of the serine supplies its oxygen atom to form the C-terminus of the beta chain, while the remainder of the serine residue undergoes an oxidative deamination to produce ammonia and the pyruvoyl prosthetic group on the alpha chain.

It is found in the cell membrane. It catalyses the reaction a 1,2-diacyl-sn-glycero-3-phospho-L-serine + H(+) = a 1,2-diacyl-sn-glycero-3-phosphoethanolamine + CO2. It functions in the pathway phospholipid metabolism; phosphatidylethanolamine biosynthesis; phosphatidylethanolamine from CDP-diacylglycerol: step 2/2. Its function is as follows. Catalyzes the formation of phosphatidylethanolamine (PtdEtn) from phosphatidylserine (PtdSer). In Magnetococcus marinus (strain ATCC BAA-1437 / JCM 17883 / MC-1), this protein is Phosphatidylserine decarboxylase proenzyme.